Consider the following 871-residue polypeptide: Protein translocase subunit SecA (871 aa).

Residues Q80, 98 to 102, and D537 contribute to the ATP site; that span reads GEGKT. A disordered region spans residues 852 to 871; it reads MEKGKKKGGSHGLGKIRVKR. Basic residues predominate over residues 855–871; the sequence is GKKKGGSHGLGKIRVKR.

The protein belongs to the SecA family. Monomer and homodimer. Part of the essential Sec protein translocation apparatus which comprises SecA, SecYEG and auxiliary proteins SecDF. Other proteins may also be involved.

Its subcellular location is the cell inner membrane. It localises to the cytoplasm. It catalyses the reaction ATP + H2O + cellular proteinSide 1 = ADP + phosphate + cellular proteinSide 2.. Functionally, part of the Sec protein translocase complex. Interacts with the SecYEG preprotein conducting channel. Has a central role in coupling the hydrolysis of ATP to the transfer of proteins into and across the cell membrane, serving as an ATP-driven molecular motor driving the stepwise translocation of polypeptide chains across the membrane. This chain is Protein translocase subunit SecA, found in Thermotoga neapolitana (strain ATCC 49049 / DSM 4359 / NBRC 107923 / NS-E).